A 153-amino-acid chain; its full sequence is 6,7-dimethyl-8-ribityllumazine synthase (153 aa).

5-amino-6-(D-ribitylamino)uracil is bound by residues Trp22, 56–58 (SYE), and 80–82 (AVI). A (2S)-2-hydroxy-3-oxobutyl phosphate-binding site is contributed by 85-86 (AT). His88 serves as the catalytic Proton donor. A 5-amino-6-(D-ribitylamino)uracil-binding site is contributed by Leu113. Arg127 serves as a coordination point for (2S)-2-hydroxy-3-oxobutyl phosphate.

This sequence belongs to the DMRL synthase family.

The catalysed reaction is (2S)-2-hydroxy-3-oxobutyl phosphate + 5-amino-6-(D-ribitylamino)uracil = 6,7-dimethyl-8-(1-D-ribityl)lumazine + phosphate + 2 H2O + H(+). The protein operates within cofactor biosynthesis; riboflavin biosynthesis; riboflavin from 2-hydroxy-3-oxobutyl phosphate and 5-amino-6-(D-ribitylamino)uracil: step 1/2. Catalyzes the formation of 6,7-dimethyl-8-ribityllumazine by condensation of 5-amino-6-(D-ribitylamino)uracil with 3,4-dihydroxy-2-butanone 4-phosphate. This is the penultimate step in the biosynthesis of riboflavin. In Herpetosiphon aurantiacus (strain ATCC 23779 / DSM 785 / 114-95), this protein is 6,7-dimethyl-8-ribityllumazine synthase.